A 98-amino-acid chain; its full sequence is Co-chaperonin GroES (98 aa).

This sequence belongs to the GroES chaperonin family. In terms of assembly, heptamer of 7 subunits arranged in a ring. Interacts with the chaperonin GroEL.

It is found in the cytoplasm. Functionally, together with the chaperonin GroEL, plays an essential role in assisting protein folding. The GroEL-GroES system forms a nano-cage that allows encapsulation of the non-native substrate proteins and provides a physical environment optimized to promote and accelerate protein folding. GroES binds to the apical surface of the GroEL ring, thereby capping the opening of the GroEL channel. The chain is Co-chaperonin GroES from Agrobacterium fabrum (strain C58 / ATCC 33970) (Agrobacterium tumefaciens (strain C58)).